The following is a 444-amino-acid chain: Tol-Pal system protein TolB (444 aa).

The first 19 residues, Met1–Ala19, serve as a signal peptide directing secretion.

This sequence belongs to the TolB family. As to quaternary structure, the Tol-Pal system is composed of five core proteins: the inner membrane proteins TolA, TolQ and TolR, the periplasmic protein TolB and the outer membrane protein Pal. They form a network linking the inner and outer membranes and the peptidoglycan layer.

It is found in the periplasm. Part of the Tol-Pal system, which plays a role in outer membrane invagination during cell division and is important for maintaining outer membrane integrity. The protein is Tol-Pal system protein TolB of Rickettsia felis (strain ATCC VR-1525 / URRWXCal2) (Rickettsia azadi).